Here is a 149-residue protein sequence, read N- to C-terminus: Small ribosomal subunit protein eS19 (149 aa).

This sequence belongs to the eukaryotic ribosomal protein eS19 family.

This Mya arenaria (Soft-shell clam) protein is Small ribosomal subunit protein eS19 (RPS19).